Reading from the N-terminus, the 637-residue chain is Epithelial sodium channel subunit alpha (637 aa).

The disordered stretch occupies residues 1–34; that stretch reads MGTASRGGSVKAEKMPEGEKTRQCKQETEQQQKE. At 1–76 the chain is on the cytoplasmic side; that stretch reads MGTASRGGSV…VCSKKNKMKT (76 aa). Over residues 11–34 the composition is skewed to basic and acidic residues; sequence KAEKMPEGEKTRQCKQETEQQQKE. The helical transmembrane segment at 77 to 97 threads the bilayer; that stretch reads AFWSVLFILTFGLMYWQFGIL. Residues 98 to 548 lie on the Extracellular side of the membrane; that stretch reads YREYFSYPVN…NQWSLWFGSS (451 aa). 10 cysteine pairs are disulfide-bonded: Cys-125/Cys-292, Cys-217/Cys-224, Cys-269/Cys-276, Cys-380/Cys-465, Cys-402/Cys-442, Cys-402/Cys-461, Cys-406/Cys-457, Cys-415/Cys-442, Cys-415/Cys-465, and Cys-417/Cys-431. A helical transmembrane segment spans residues 549–569; it reads VLSVMELAELILDFTVITFIL. The Cytoplasmic portion of the chain corresponds to 570–637; sequence AFRWFRSKQW…PSKDGETGLE (68 aa).

The protein belongs to the amiloride-sensitive sodium channel (TC 1.A.6) family. SCNN1A subfamily. As to quaternary structure, heterotrimer; containing an alpha/SCNN1A, a beta/SCNN1B and a gamma/SCNN1G subunit. In terms of tissue distribution, the long isoform has been found in cochlea, colon, and cartilage. The short isoform is only found in cochlea.

Its subcellular location is the apical cell membrane. The protein localises to the cell projection. The protein resides in the cilium. It is found in the cytoplasmic granule. It localises to the cytoplasm. Its subcellular location is the cytoplasmic vesicle. The protein localises to the secretory vesicle. The protein resides in the acrosome. It is found in the flagellum. The catalysed reaction is Na(+)(in) = Na(+)(out). Originally identified and characterized by its inhibition by the diuretic drug amiloride. Its function is as follows. This is one of the three pore-forming subunits of the heterotrimeric epithelial sodium channel (ENaC), a critical regulator of sodium balance and fluid homeostasis. ENaC operates in epithelial tissues, where it mediates the electrodiffusion of sodium ions from extracellular fluid through the apical membrane of cells, with water following osmotically. This is Epithelial sodium channel subunit alpha from Gallus gallus (Chicken).